Consider the following 122-residue polypeptide: Ferredoxin (122 aa).

The tract at residues 1-33 (MSHDRRLTVGSLLPNQPRPVAVPKAPSVVQPSK) is disordered. A targeting peptide region spans residues 8–14 (TVGSLLP). A 2Fe-2S ferredoxin-type domain is found at 40–122 (AIIRLEQNGR…FRLACQANME (83 aa)). [2Fe-2S] cluster is bound by residues cysteine 75, cysteine 80, cysteine 83, and cysteine 117.

This sequence belongs to the 2Fe2S plant-type ferredoxin family. It depends on [2Fe-2S] cluster as a cofactor.

It is found in the encapsulin nanocompartment. Functionally, cargo protein of a type 1 encapsulin nanocompartment. An iron-binding protein probably involved in iron mineralization in the encapsulin nanocompartment. 2 different cargo proteins have been identified (IMEF and Fer); when both are expressed in E.coli with the shell protein only IMEF is detected within the nanocompartment. E.coli expressing all 3 genes stores the largest amount of iron and is protected from Fe/H2O2-induced oxidative stress. In Bacillus thermotolerans (Quasibacillus thermotolerans), this protein is Ferredoxin.